An 886-amino-acid polypeptide reads, in one-letter code: Extended synaptotagmin-3 (886 aa).

Residues 1-21 (MRAEEPCAPGAPSALGAQRTP) are disordered. Residues 1 to 29 (MRAEEPCAPGAPSALGAQRTPGPELRLSS) lie on the Cytoplasmic side of the membrane. Helical transmembrane passes span 30–50 (QLLP…GPVY) and 51–71 (LAGY…LWMW). Residues 72-886 (WRRNRRGKLG…ELTPNGQPRS (815 aa)) are Cytoplasmic-facing. The 178-residue stretch at 114-291 (DVERVEWANK…LPNRVTVPVK (178 aa)) folds into the SMP-LTD domain. 2 C2 domains span residues 291–408 (KKGL…DEWF) and 426–566 (SLLT…QLDH). Residues Lys-321, Asp-322, Asp-332, Asp-379, Glu-380, Asp-381, Asp-383, Asp-385, and Asp-386 each coordinate Ca(2+). Residues 613-673 (QGPKAQPQEE…PEPKGKDSAK (61 aa)) are disordered. Residues 642–659 (RSTTTTTSATTVATEPTS) are compositionally biased toward low complexity. The segment covering 664–673 (PEPKGKDSAK) has biased composition (basic and acidic residues). The region spanning 754–876 (QLGEIQLTVR…DLIKGFSQWY (123 aa)) is the C2 3 domain. Positions 801-808 (RKWACRKK) are required for phosphatidylinositol 4,5-bisphosphate-dependent location at the cell membrane.

It belongs to the extended synaptotagmin family. As to quaternary structure, interacts with ESYT1 and ESYT2. As to expression, widely expressed with high level in cerebellum and skin.

The protein resides in the cell membrane. The protein localises to the endoplasmic reticulum membrane. Functionally, binds glycerophospholipids in a barrel-like domain and may play a role in cellular lipid transport. Tethers the endoplasmic reticulum to the cell membrane and promotes the formation of appositions between the endoplasmic reticulum and the cell membrane. The protein is Extended synaptotagmin-3 of Homo sapiens (Human).